The chain runs to 150 residues: Transcriptional regulator MraZ (150 aa).

2 SpoVT-AbrB domains span residues Phe-8 to His-55 and Ala-84 to Asn-127.

This sequence belongs to the MraZ family. As to quaternary structure, forms oligomers.

Its subcellular location is the cytoplasm. The protein resides in the nucleoid. The polypeptide is Transcriptional regulator MraZ (Rickettsia bellii (strain OSU 85-389)).